The following is a 492-amino-acid chain: Cholesteryl ester transfer protein (492 aa).

Residues 1–17 (MLAVTLLSLALLGSTCA) form the signal peptide. Cys160 and Cys201 form a disulfide bridge. N-linked (GlcNAc...) asparagine glycosylation is present at Asn257.

It belongs to the BPI/LBP/Plunc superfamily. BPI/LBP family.

It is found in the secreted. The catalysed reaction is cholesteryl (9Z-octadecenoate)(in) = cholesteryl (9Z-octadecenoate)(out). It catalyses the reaction 1,2,3-tri-(9Z-octadecenoyl)-glycerol(in) = 1,2,3-tri-(9Z-octadecenoyl)-glycerol(out). The enzyme catalyses cholesteryl (9Z,12Z)-octadecadienoate(in) = cholesteryl (9Z,12Z)-octadecadienoate(out). Its function is as follows. Involved in the transfer of neutral lipids, including cholesteryl ester and triglyceride, among lipoprotein particles. Allows the net movement of cholesteryl ester from high density lipoproteins/HDL to triglyceride-rich very low density lipoproteins/VLDL, and the equimolar transport of triglyceride from VLDL to HDL. Regulates the reverse cholesterol transport, by which excess cholesterol is removed from peripheral tissues and returned to the liver for elimination. This is Cholesteryl ester transfer protein from Cricetulus griseus (Chinese hamster).